Reading from the N-terminus, the 509-residue chain is tRNA-2-methylthio-N(6)-dimethylallyladenosine synthase (509 aa).

The interval 1–21 (MNEKQKLESGQVHPSDKKSEK) is disordered. The MTTase N-terminal domain occupies 66–184 (RKFYIRTYGC…LPELLSEAYL (119 aa)). 6 residues coordinate [4Fe-4S] cluster: C75, C111, C145, C221, C225, and C228. In terms of domain architecture, Radical SAM core spans 207–437 (RNGKIKGWVN…NALVNEISAK (231 aa)). A TRAM domain is found at 440–503 (KEYEGKVVEV…TWSLDGEMVG (64 aa)).

Belongs to the methylthiotransferase family. MiaB subfamily. In terms of assembly, monomer. Requires [4Fe-4S] cluster as cofactor.

It localises to the cytoplasm. The catalysed reaction is N(6)-dimethylallyladenosine(37) in tRNA + (sulfur carrier)-SH + AH2 + 2 S-adenosyl-L-methionine = 2-methylsulfanyl-N(6)-dimethylallyladenosine(37) in tRNA + (sulfur carrier)-H + 5'-deoxyadenosine + L-methionine + A + S-adenosyl-L-homocysteine + 2 H(+). The enzyme catalyses N(6)-dimethylallyladenosine(37) in tRNA + (sulfur carrier)-SH + AH2 + S-adenosyl-L-methionine = 2-thio-N(6)-dimethylallyladenosine(37) in tRNA + (sulfur carrier)-H + 5'-deoxyadenosine + L-methionine + A + H(+). It carries out the reaction 2-thio-N(6)-dimethylallyladenosine(37) in tRNA + S-adenosyl-L-methionine = 2-methylsulfanyl-N(6)-dimethylallyladenosine(37) in tRNA + S-adenosyl-L-homocysteine + H(+). In terms of biological role, catalyzes the methylthiolation of N6-(dimethylallyl)adenosine (i(6)A), leading to the formation of 2-methylthio-N6-(dimethylallyl)adenosine (ms(2)i(6)A) at position 37 in tRNAs that read codons beginning with uridine. The protein is tRNA-2-methylthio-N(6)-dimethylallyladenosine synthase of Bacillus subtilis (strain 168).